The chain runs to 447 residues: Methylenetetrahydrofolate--tRNA-(uracil-5-)-methyltransferase TrmFO (447 aa).

8–13 (GGGLAG) serves as a coordination point for FAD. A disordered region spans residues 398 to 421 (NWGLVPAPPKRENGRRLGRQERRR). Residues 406 to 417 (PKRENGRRLGRQ) show a composition bias toward basic and acidic residues.

The protein belongs to the MnmG family. TrmFO subfamily. The cofactor is FAD.

It is found in the cytoplasm. It carries out the reaction uridine(54) in tRNA + (6R)-5,10-methylene-5,6,7,8-tetrahydrofolate + NADH + H(+) = 5-methyluridine(54) in tRNA + (6S)-5,6,7,8-tetrahydrofolate + NAD(+). The enzyme catalyses uridine(54) in tRNA + (6R)-5,10-methylene-5,6,7,8-tetrahydrofolate + NADPH + H(+) = 5-methyluridine(54) in tRNA + (6S)-5,6,7,8-tetrahydrofolate + NADP(+). Its function is as follows. Catalyzes the folate-dependent formation of 5-methyl-uridine at position 54 (M-5-U54) in all tRNAs. The chain is Methylenetetrahydrofolate--tRNA-(uracil-5-)-methyltransferase TrmFO from Rubrobacter xylanophilus (strain DSM 9941 / JCM 11954 / NBRC 16129 / PRD-1).